The following is a 347-amino-acid chain: tRNA N6-adenosine threonylcarbamoyltransferase (347 aa).

Positions 115 and 119 each coordinate Fe cation. Substrate contacts are provided by residues 137–141 (LASGG), Asp-170, Gly-183, and Asn-281. Asp-309 serves as a coordination point for Fe cation.

It belongs to the KAE1 / TsaD family. The cofactor is Fe(2+).

The protein resides in the cytoplasm. It carries out the reaction L-threonylcarbamoyladenylate + adenosine(37) in tRNA = N(6)-L-threonylcarbamoyladenosine(37) in tRNA + AMP + H(+). Its function is as follows. Required for the formation of a threonylcarbamoyl group on adenosine at position 37 (t(6)A37) in tRNAs that read codons beginning with adenine. Is involved in the transfer of the threonylcarbamoyl moiety of threonylcarbamoyl-AMP (TC-AMP) to the N6 group of A37, together with TsaE and TsaB. TsaD likely plays a direct catalytic role in this reaction. In Methylorubrum extorquens (strain CM4 / NCIMB 13688) (Methylobacterium extorquens), this protein is tRNA N6-adenosine threonylcarbamoyltransferase.